The sequence spans 390 residues: Methionyl-tRNA formyltransferase, mitochondrial (390 aa).

The N-terminal 33 residues, 1 to 33, are a transit peptide targeting the mitochondrion; it reads MRVLLRCCCGHLPVGGGAGRRSNPRWRALARLS.

This sequence belongs to the Fmt family.

It localises to the mitochondrion. The catalysed reaction is L-methionyl-tRNA(fMet) + (6R)-10-formyltetrahydrofolate = N-formyl-L-methionyl-tRNA(fMet) + (6S)-5,6,7,8-tetrahydrofolate + H(+). Its function is as follows. Methionyl-tRNA formyltransferase that formylates methionyl-tRNA in mitochondria and is crucial for translation initiation. This is Methionyl-tRNA formyltransferase, mitochondrial (MTFMT) from Bos taurus (Bovine).